A 324-amino-acid chain; its full sequence is Probable nicotianamine synthase 4 (324 aa).

Belongs to the nicotianamine synthase (NAS)-like family.

The enzyme catalyses 3 S-adenosyl-L-methionine = nicotianamine + 3 S-methyl-5'-thioadenosine + 3 H(+). Its function is as follows. Synthesizes nicotianamine, a polyamine which serves as a sensor for the physiological iron status within the plant, and/or might be involved in the transport of iron. In Arabidopsis thaliana (Mouse-ear cress), this protein is Probable nicotianamine synthase 4 (NAS4).